The following is a 553-amino-acid chain: CTP synthase (553 aa).

The segment at 1–270 (MTKYVFVTGG…DDLICRELEL (270 aa)) is amidoligase domain. CTP is bound at residue S13. S13 contacts UTP. Residues 14 to 19 (SLGKGI) and D71 each bind ATP. D71 and E144 together coordinate Mg(2+). CTP contacts are provided by residues 151–153 (DIE), 191–196 (KTKPTQ), and K227. UTP-binding positions include 191-196 (KTKPTQ) and K227. Residues 295-547 (TIGMVGKYVE…IKAALIHQDA (253 aa)) form the Glutamine amidotransferase type-1 domain. L-glutamine is bound at residue G356. C383 functions as the Nucleophile; for glutamine hydrolysis in the catalytic mechanism. Residues 384-387 (LGMQ), E407, and R473 each bind L-glutamine. Active-site residues include H520 and E522.

The protein belongs to the CTP synthase family. In terms of assembly, homotetramer.

It catalyses the reaction UTP + L-glutamine + ATP + H2O = CTP + L-glutamate + ADP + phosphate + 2 H(+). It carries out the reaction L-glutamine + H2O = L-glutamate + NH4(+). The enzyme catalyses UTP + NH4(+) + ATP = CTP + ADP + phosphate + 2 H(+). It participates in pyrimidine metabolism; CTP biosynthesis via de novo pathway; CTP from UDP: step 2/2. Allosterically activated by GTP, when glutamine is the substrate; GTP has no effect on the reaction when ammonia is the substrate. The allosteric effector GTP functions by stabilizing the protein conformation that binds the tetrahedral intermediate(s) formed during glutamine hydrolysis. Inhibited by the product CTP, via allosteric rather than competitive inhibition. Catalyzes the ATP-dependent amination of UTP to CTP with either L-glutamine or ammonia as the source of nitrogen. Regulates intracellular CTP levels through interactions with the four ribonucleotide triphosphates. The sequence is that of CTP synthase from Polynucleobacter asymbioticus (strain DSM 18221 / CIP 109841 / QLW-P1DMWA-1) (Polynucleobacter necessarius subsp. asymbioticus).